The chain runs to 727 residues: Prolyl endopeptidase-like (727 aa).

M1 carries the post-translational modification N-acetylmethionine. Catalysis depends on charge relay system residues S559, D645, and H690.

This sequence belongs to the peptidase S9A family. In terms of assembly, homodimer. Interacts with the AP-1 complex. As to expression, expressed in pyramidal neurons of the temporal cortex and neocortex (at protein level). Widely expressed. Expressed at higher level in brain, skeletal muscle, heart and kidney. Expressed at the endplates in the neuromuscular junction.

It localises to the cytoplasm. Its subcellular location is the cytosol. It is found in the golgi apparatus. The protein resides in the trans-Golgi network. The protein localises to the cytoskeleton. It localises to the nucleus. Inhibited by PMSF and Prefabloc, as well as leupeptin at high concentrations. Partially inhibited by TPCK, a chymotrypsin inhibitor and E64, a cysteine protease inhibitor. Not affected by 4-amidinophenyl-methanesulfonyl fluoride (APMSF), pepstatin or EDTA. Inhibited by 1-isobutyl-3-oxo-3,5,6,7-tetrahydro-2H-cyclopenta[c]pyridine-4-carbonitrile. In terms of biological role, serine peptidase whose precise substrate specificity remains unclear. Does not cleave peptides after a arginine or lysine residue. Regulates trans-Golgi network morphology and sorting by regulating the membrane binding of the AP-1 complex. May play a role in the regulation of synaptic vesicle exocytosis. The polypeptide is Prolyl endopeptidase-like (PREPL) (Homo sapiens (Human)).